The chain runs to 100 residues: Urease subunit gamma (100 aa).

The protein belongs to the urease gamma subunit family. Heterotrimer of UreA (gamma), UreB (beta) and UreC (alpha) subunits. Three heterotrimers associate to form the active enzyme.

It localises to the cytoplasm. The enzyme catalyses urea + 2 H2O + H(+) = hydrogencarbonate + 2 NH4(+). The protein operates within nitrogen metabolism; urea degradation; CO(2) and NH(3) from urea (urease route): step 1/1. In Saccharopolyspora erythraea (strain ATCC 11635 / DSM 40517 / JCM 4748 / NBRC 13426 / NCIMB 8594 / NRRL 2338), this protein is Urease subunit gamma.